The sequence spans 465 residues: Ribulose bisphosphate carboxylase large chain (465 aa).

Residue lysine 4 is modified to N6,N6,N6-trimethyllysine. 2 residues coordinate substrate: asparagine 113 and threonine 163. Lysine 165 serves as the catalytic Proton acceptor. Lysine 167 is a binding site for substrate. 3 residues coordinate Mg(2+): lysine 191, aspartate 193, and glutamate 194. The residue at position 191 (lysine 191) is an N6-carboxylysine. Histidine 284 (proton acceptor) is an active-site residue. Positions 285, 317, and 369 each coordinate substrate.

Belongs to the RuBisCO large chain family. Type I subfamily. Heterohexadecamer of 8 large chains and 8 small chains; disulfide-linked. The disulfide link is formed within the large subunit homodimers. Mg(2+) is required as a cofactor. Post-translationally, the disulfide bond which can form in the large chain dimeric partners within the hexadecamer appears to be associated with oxidative stress and protein turnover.

It is found in the plastid. It localises to the chloroplast. It carries out the reaction 2 (2R)-3-phosphoglycerate + 2 H(+) = D-ribulose 1,5-bisphosphate + CO2 + H2O. The enzyme catalyses D-ribulose 1,5-bisphosphate + O2 = 2-phosphoglycolate + (2R)-3-phosphoglycerate + 2 H(+). In terms of biological role, ruBisCO catalyzes two reactions: the carboxylation of D-ribulose 1,5-bisphosphate, the primary event in carbon dioxide fixation, as well as the oxidative fragmentation of the pentose substrate in the photorespiration process. Both reactions occur simultaneously and in competition at the same active site. The polypeptide is Ribulose bisphosphate carboxylase large chain (Byrsonima crassifolia (Cajuil cimarron)).